The following is a 439-amino-acid chain: Histidinol dehydrogenase (439 aa).

NAD(+) is bound by residues Tyr-129, Gln-193, and Asn-222. The substrate site is built by Thr-245, Gln-267, and His-270. Gln-267 and His-270 together coordinate Zn(2+). Catalysis depends on proton acceptor residues Glu-336 and His-337. Positions 337, 370, 424, and 429 each coordinate substrate. Asp-370 provides a ligand contact to Zn(2+). His-429 is a binding site for Zn(2+).

The protein belongs to the histidinol dehydrogenase family. Requires Zn(2+) as cofactor.

The enzyme catalyses L-histidinol + 2 NAD(+) + H2O = L-histidine + 2 NADH + 3 H(+). It participates in amino-acid biosynthesis; L-histidine biosynthesis; L-histidine from 5-phospho-alpha-D-ribose 1-diphosphate: step 9/9. Functionally, catalyzes the sequential NAD-dependent oxidations of L-histidinol to L-histidinaldehyde and then to L-histidine. The polypeptide is Histidinol dehydrogenase (Cutibacterium acnes (strain DSM 16379 / KPA171202) (Propionibacterium acnes)).